The sequence spans 407 residues: Imidazolonepropionase (407 aa).

Fe(3+) contacts are provided by histidine 68 and histidine 70. Zn(2+) contacts are provided by histidine 68 and histidine 70. 3 residues coordinate 4-imidazolone-5-propanoate: arginine 77, tyrosine 140, and histidine 173. Tyrosine 140 is an N-formimidoyl-L-glutamate binding site. Histidine 238 contacts Fe(3+). Histidine 238 provides a ligand contact to Zn(2+). A 4-imidazolone-5-propanoate-binding site is contributed by glutamine 241. Aspartate 313 provides a ligand contact to Fe(3+). Aspartate 313 lines the Zn(2+) pocket. Asparagine 315 and glycine 317 together coordinate N-formimidoyl-L-glutamate. Threonine 318 provides a ligand contact to 4-imidazolone-5-propanoate.

Belongs to the metallo-dependent hydrolases superfamily. HutI family. Requires Zn(2+) as cofactor. It depends on Fe(3+) as a cofactor.

It localises to the cytoplasm. The enzyme catalyses 4-imidazolone-5-propanoate + H2O = N-formimidoyl-L-glutamate. Its pathway is amino-acid degradation; L-histidine degradation into L-glutamate; N-formimidoyl-L-glutamate from L-histidine: step 3/3. Functionally, catalyzes the hydrolytic cleavage of the carbon-nitrogen bond in imidazolone-5-propanoate to yield N-formimidoyl-L-glutamate. It is the third step in the universal histidine degradation pathway. This Burkholderia orbicola (strain MC0-3) protein is Imidazolonepropionase.